The primary structure comprises 1076 residues: Structural maintenance of chromosomes protein 5 (1076 aa).

Position 49-56 (49-56 (GHNGSGKS)) interacts with ATP. Positions 190–415 (STSIEDKCTT…KRDEEQNSQL (226 aa)) form a coiled coil. A compositionally biased stretch (basic and acidic residues) spans 375–410 (EQKYSTAERDSRQEEDAIQKKSYEMRQLENKKRDEE). Positions 375-420 (EQKYSTAERDSRQEEDAIQKKSYEMRQLENKKRDEEQNSQLNRQDR) are disordered. The interval 416–617 (NRQDRYRVLQ…ANTWRDQFFK (202 aa)) is flexible hinge. Coiled-coil stretches lie at residues 627 to 713 (NSIL…EKKA) and 749 to 786 (KSRV…ALNH).

This sequence belongs to the SMC family. SMC5 subfamily. As to quaternary structure, interacts with smc-6. In terms of tissue distribution, expressed in the germline (at protein level).

It localises to the nucleus. The protein localises to the chromosome. Core component of the smc-5/smc-6 complex. Functions in DNA double strand break repair by promoting sister-chromatid homologous recombination during meiosis. Acts in a DNA repair pathway for removal of ionizing radiation- and ultraviolet (UV) radiation-induced DNA lesions that is distinct from classical nucleotide excision repair and the translesion synthesis pathway. Also involved in the recovery of stalled replication forks. This is Structural maintenance of chromosomes protein 5 from Caenorhabditis elegans.